The chain runs to 153 residues: UPF0756 membrane protein Bcer98_3279 (153 aa).

Transmembrane regions (helical) follow at residues 8–28 (FLFI…IVAI), 54–74 (LGVT…EIGF), 87–107 (WIAL…LQLL), and 117–137 (LVFG…GPLI).

This sequence belongs to the UPF0756 family.

It is found in the cell membrane. The chain is UPF0756 membrane protein Bcer98_3279 from Bacillus cytotoxicus (strain DSM 22905 / CIP 110041 / 391-98 / NVH 391-98).